A 60-amino-acid polypeptide reads, in one-letter code: MAKGKENRIVITLECTEAKKEGKPVSRYTTTKNKKNTTERLVLKKYNPNLQRHTLHKEIK.

This sequence belongs to the bacterial ribosomal protein bL33 family.

This chain is Large ribosomal subunit protein bL33, found in Chlorobium chlorochromatii (strain CaD3).